Reading from the N-terminus, the 229-residue chain is Ribonuclease S-6 (229 aa).

Positions 1–27 (MGITGMIYMVPMVFSLIVLISCSSTMG) are cleaved as a signal peptide. An RNA-binding site is contributed by Gln-36. Cys-42 and Cys-49 are joined by a disulfide. RNA is bound at residue His-60. The active-site Proton donor is His-60. The cysteines at positions 75 and 119 are disulfide-linked. N-linked (GlcNAc) asparagine glycans are attached at residues Asn-77 and Asn-87. RNA contacts are provided by residues 98-99 (NV), Phe-108, 111-112 (RQ), and 115-116 (KH). Gln-112 is an active-site residue. The active-site Proton acceptor is His-116. Residue Asn-145 is glycosylated (N-linked (GlcNAc...) (high mannose) asparagine). 2 disulfide bridges follow: Cys-184/Cys-222 and Cys-199/Cys-210. Residue Asn-188 is glycosylated (N-linked (GlcNAc) asparagine; alternate). N-linked (GlcNAc...) asparagine; alternate glycosylation is found at Asn-188 and Asn-203.

Belongs to the RNase T2 family. In terms of processing, the N-glycans attached at Asn-188 and Asn-203 consist of either monosaccharide (GlcNAc) or disaccharide (GlcNAc-GlcNAc) that could not be distinguished.

The catalysed reaction is a ribonucleotidyl-ribonucleotide-RNA + H2O = a 3'-end 3'-phospho-ribonucleotide-RNA + a 5'-end dephospho-ribonucleoside-RNA + H(+). Its function is as follows. Self-incompatibility (SI) is the inherited ability of a flowering plant to prevent self-fertilization by discriminating between self and non-self pollen during pollination. In many species, self-incompatibility is controlled by the single, multiallelic locus S. The polypeptide is Ribonuclease S-6 (Pyrus pyrifolia (Chinese pear)).